The sequence spans 1171 residues: Kinesin-like protein GA13060 (1171 aa).

The tract at residues 1–24 is disordered; that stretch reads MASSISRNGGFCGALQRAPPPMPP. The Kinesin motor domain occupies 40–400; sequence KVKVMLRVSD…IQIASRIHRL (361 aa). Disordered stretches follow at residues 737–774, 798–820, 932–955, 1043–1099, and 1124–1143; these read LLGQ…GSRD, LVAS…SQRS, PAYR…SLPS, TSSE…QRHR, and RHSH…EGNG. Over residues 805 to 816 the composition is skewed to basic residues; sequence SSHHQHQHHRPS. The span at 1043-1059 shows a compositional bias: polar residues; it reads TSSEAYDSGHDSNSTPR. Residues 1124 to 1139 show a composition bias toward basic residues; sequence RHSHGVGGHKKHRHRH.

The protein belongs to the TRAFAC class myosin-kinesin ATPase superfamily. Kinesin family. KIF26 subfamily.

Its subcellular location is the cytoplasm. The protein resides in the cytoskeleton. The protein is Kinesin-like protein GA13060 of Drosophila pseudoobscura pseudoobscura (Fruit fly).